A 1094-amino-acid polypeptide reads, in one-letter code: Probable arabinosyltransferase A (1094 aa).

13 consecutive transmembrane segments (helical) span residues 12 to 34 (IARLAAVVSGIAGLLLCGIVPLL), 205 to 224 (AVMLLGVLAVLVAMVGLAAL), 247 to 269 (GFASRLADAAVIATLLLWHVIGA), 322 to 344 (VWMRLPATLAGIACWLIVSRFVL), 356 to 375 (SNRVAVFTAGAVFLSAWLPF), 408 to 430 (AAVAIIVATLTATLAPQGLIALA), 451 to 470 (GLLAPLAVLAAALSLITVVV), 519 to 536 (FAVLVLLFCLFGVLFVLL), 543 to 565 (GLASGPAWRLIGTTAVGLLLLTF), 575 to 597 (GAFAGLAGVLGAVTAFTFARIGL), 604 to 626 (TLYVTALLFVLAWATSGINGWFY), 641 to 663 (IASHPVTSMFLTLSILTGLLAAW), and 684 to 706 (ILASTPLLVVAVIMVAGEVGSMA).

This sequence belongs to the emb family.

Its subcellular location is the cell membrane. Arabinosyl transferase responsible for the polymerization of arabinose into the arabinan of arabinogalactan. In Mycobacterium tuberculosis (strain CDC 1551 / Oshkosh), this protein is Probable arabinosyltransferase A (embA).